A 121-amino-acid polypeptide reads, in one-letter code: MILFSPKEIKDIEELVKEREGSVEEIEVIKLNETPNISQFLVFIKTSEVPHYHAEHDLTFTVLKGKGELYLEGEKKKLKEGDWAFIPKGAVHFYRNTSELSVLLAIFSPSYDGKDSVRVEL.

A Cupin type-2 domain is found at 47-101 (SEVPHYHAEHDLTFTVLKGKGELYLEGEKKKLKEGDWAFIPKGAVHFYRNTSELS).

This is an uncharacterized protein from Aquifex aeolicus (strain VF5).